A 991-amino-acid polypeptide reads, in one-letter code: Antigenic heat-stable 120 kDa protein (991 aa).

3 disordered regions span residues 1–37, 54–73, and 348–384; these read DTSE…TPAL, TPSM…TSDP, and GQSK…TNQP. Residues 12 to 29 are compositionally biased toward basic and acidic residues; that stretch reads EYTEEQKQTEEQEQKEFL. The span at 348-373 shows a compositional bias: polar residues; that stretch reads GQSKEQPLITPQQTTSSSVEPPQYKQ.

Its subcellular location is the cytoplasm. The polypeptide is Antigenic heat-stable 120 kDa protein (sca4) (Rickettsia sibirica).